A 150-amino-acid chain; its full sequence is Small ribosomal subunit protein eS19S (150 aa).

It belongs to the eukaryotic ribosomal protein eS19 family.

The protein is Small ribosomal subunit protein eS19S (RPS19S) of Ascaris suum (Pig roundworm).